A 258-amino-acid chain; its full sequence is Pyridoxine 5'-phosphate synthase (258 aa).

Residue N6 participates in 3-amino-2-oxopropyl phosphate binding. D8–H9 serves as a coordination point for 1-deoxy-D-xylulose 5-phosphate. R17 provides a ligand contact to 3-amino-2-oxopropyl phosphate. Catalysis depends on H42, which acts as the Proton acceptor. 2 residues coordinate 1-deoxy-D-xylulose 5-phosphate: R44 and H49. The active-site Proton acceptor is the E69. A 1-deoxy-D-xylulose 5-phosphate-binding site is contributed by T99. Residue H213 is the Proton donor of the active site. Residues G214 and G235–Q236 contribute to the 3-amino-2-oxopropyl phosphate site.

Belongs to the PNP synthase family. Homooctamer; tetramer of dimers.

The protein localises to the cytoplasm. The enzyme catalyses 3-amino-2-oxopropyl phosphate + 1-deoxy-D-xylulose 5-phosphate = pyridoxine 5'-phosphate + phosphate + 2 H2O + H(+). It participates in cofactor biosynthesis; pyridoxine 5'-phosphate biosynthesis; pyridoxine 5'-phosphate from D-erythrose 4-phosphate: step 5/5. Its function is as follows. Catalyzes the complicated ring closure reaction between the two acyclic compounds 1-deoxy-D-xylulose-5-phosphate (DXP) and 3-amino-2-oxopropyl phosphate (1-amino-acetone-3-phosphate or AAP) to form pyridoxine 5'-phosphate (PNP) and inorganic phosphate. The chain is Pyridoxine 5'-phosphate synthase from Sulfurovum sp. (strain NBC37-1).